Consider the following 346-residue polypeptide: 4-amino-5-hydroxymethyl-2-methylpyrimidine phosphate synthase (346 aa).

The residue at position 62 (Lys-62) is an N6-(pyridoxal phosphate)lysine. The active site involves His-66. 114 to 117 (GEFG) provides a ligand contact to pyridoxal 5'-phosphate. Positions 194-198 (CCCFC) match the CCCFC; essential for catalytic activity, may be the site of iron coordination motif.

The protein belongs to the NMT1/THI5 family. As to quaternary structure, homodimer. The cofactor is Fe cation.

The protein localises to the cytoplasm. The protein resides in the nucleus. The catalysed reaction is N(6)-(pyridoxal phosphate)-L-lysyl-[4-amino-5-hydroxymethyl-2-methylpyrimidine phosphate synthase] + L-histidyl-[4-amino-5-hydroxymethyl-2-methylpyrimidine phosphate synthase] + 2 Fe(3+) + 4 H2O = L-lysyl-[4-amino-5-hydroxymethyl-2-methylpyrimidine phosphate synthase] + (2S)-2-amino-5-hydroxy-4-oxopentanoyl-[4-amino-5-hydroxymethyl-2-methylpyrimidine phosphate synthase] + 4-amino-2-methyl-5-(phosphooxymethyl)pyrimidine + 3-oxopropanoate + 2 Fe(2+) + 2 H(+). It functions in the pathway cofactor biosynthesis; thiamine diphosphate biosynthesis. Its function is as follows. Responsible for the formation of the pyrimidine heterocycle in the thiamine biosynthesis pathway. Catalyzes the formation of hydroxymethylpyrimidine phosphate (HMP-P) from histidine and pyridoxal phosphate (PLP). The protein uses PLP and the active site histidine to form HMP-P, generating an inactive enzyme. The enzyme can only undergo a single turnover, which suggests it is a suicide enzyme. This Schizosaccharomyces pombe (strain 972 / ATCC 24843) (Fission yeast) protein is 4-amino-5-hydroxymethyl-2-methylpyrimidine phosphate synthase.